A 79-amino-acid chain; its full sequence is Suppressor of tumorigenicity 20 protein (79 aa).

As to expression, expressed in leukocytes, lung, spleen, liver, heart, kidney, muscle and uterine cervix. Down-regulated in cervical cancer.

May act as a tumor suppressor. Promotes apoptosis of cancer cells. This chain is Suppressor of tumorigenicity 20 protein (ST20), found in Homo sapiens (Human).